We begin with the raw amino-acid sequence, 323 residues long: Calcium homeostasis modulator protein 2 (323 aa).

Over 1 to 21 the chain is Cytoplasmic; sequence MAALIAENFRFLSLFFKSKDV. The tract at residues 14–39 is central pore; it reads LFFKSKDVMIFNGLVALGTVGSQELF. The helical transmembrane segment at 22-43 threads the bilayer; the sequence is MIFNGLVALGTVGSQELFSVVA. The Extracellular segment spans residues 44–52; that stretch reads FHCPCSPAR. Cystine bridges form between C46–C130 and C48–C162. Residues 53 to 76 traverse the membrane as a helical segment; it reads NYLYGLTAIGVPALALFLIGVILN. Over 77–101 the chain is Cytoplasmic; it reads NHTWNLVAECQYRRAKNCSAAPTFL. Residues 102-132 form a helical membrane-spanning segment; sequence LLSSILGRAAVAPVTWSVISLLRGEAYVCAL. At 133-179 the chain is on the extracellular side; sequence SEFVDPSSLTAGDEGFPPDHATEILARFPCGEGPANLSGFREEVSRR. Positions 145–152 are hemichannel docking; sequence DEGFPPDH. Residues 180-206 traverse the membrane as a helical segment; the sequence is LKYESQLFGWLLIGVVAILVFLTKCFK. The Cytoplasmic portion of the chain corresponds to 207 to 323; sequence HYCSPLSYRQ…DNVEMALLTV (117 aa). The tract at residues 214-251 is intersubunit interaction; that stretch reads YRQEAYWAQYRTNEDQLFQRTAEVHSRVLAANNVRRFF.

This sequence belongs to the CALHM family. In terms of assembly, homo-undecamer. Two undecameric hemichannels can assemble in a head-to-head manner to form a gap junction.

It localises to the cell membrane. The catalysed reaction is ATP(in) = ATP(out). In terms of biological role, pore-forming subunit of Ca(2+) homeostasis modulator channels. Mediates ATP release from astrocytes and ATP-induced Ca(2+) influx in microglia thus regulating neuronal ATP and Ca(2+) homeostasis, synaptic transmission and neuroinflammatory response. May form intercellular gap junctions. The gating mechanism remains unknown. The sequence is that of Calcium homeostasis modulator protein 2 (Calhm2) from Rattus norvegicus (Rat).